The chain runs to 651 residues: Acetyl-coenzyme A synthetase (651 aa).

CoA-binding positions include Arg-189 to Lys-192, Thr-311, and Asn-335. ATP-binding positions include Gly-387–Pro-389, Asp-411–Thr-416, Asp-500, and Arg-515. CoA is bound at residue Ser-523. Arg-526 contributes to the ATP binding site. The Mg(2+) site is built by Val-537, His-539, and Val-542. Arg-584 contributes to the CoA binding site. Lys-609 carries the post-translational modification N6-acetyllysine.

It belongs to the ATP-dependent AMP-binding enzyme family. It depends on Mg(2+) as a cofactor. Acetylated. Deacetylation by the SIR2-homolog deacetylase activates the enzyme.

The enzyme catalyses acetate + ATP + CoA = acetyl-CoA + AMP + diphosphate. Catalyzes the conversion of acetate into acetyl-CoA (AcCoA), an essential intermediate at the junction of anabolic and catabolic pathways. AcsA undergoes a two-step reaction. In the first half reaction, AcsA combines acetate with ATP to form acetyl-adenylate (AcAMP) intermediate. In the second half reaction, it can then transfer the acetyl group from AcAMP to the sulfhydryl group of CoA, forming the product AcCoA. In Rhizobium leguminosarum bv. trifolii (strain WSM2304), this protein is Acetyl-coenzyme A synthetase.